The primary structure comprises 343 residues: Ribosomal RNA small subunit methyltransferase C (343 aa).

Belongs to the methyltransferase superfamily. RsmC family. In terms of assembly, monomer.

The protein resides in the cytoplasm. It carries out the reaction guanosine(1207) in 16S rRNA + S-adenosyl-L-methionine = N(2)-methylguanosine(1207) in 16S rRNA + S-adenosyl-L-homocysteine + H(+). Functionally, specifically methylates the guanine in position 1207 of 16S rRNA in the 30S particle. The chain is Ribosomal RNA small subunit methyltransferase C from Shigella flexneri serotype 5b (strain 8401).